The primary structure comprises 393 residues: Acyltransferase ato1 (393 aa).

The protein belongs to the lysine N-acyltransferase mbtK family.

The protein operates within siderophore biosynthesis; ferrichrome biosynthesis. L-ornithine N(5)-monooxygenase; part of the siderophore biosynthetic pathway. Omphalotus olearius produces ferrichrome A, but no other siderophore has been detected. Ferrichrome A consists of a hexapeptide ring made up of one glycine, two serine, and three N(5)-hydroxyornithine amino acid residues, the latter acylated by trans-(alpha-methyl)-glutaconic acid residues. The biosynthesis of ferrichrome A depends on the hydroxylation of ornithine to N(5)-hydroxyornithine, catalyzed by the monooxygenase omo1. The second step, the acylation of N(5)-hydroxy-L-ornithine is probably catalyzed by the N-acyltransferase ato1. Finally, assembly of ferrichrome A is catalyzed by the nonribosomal peptide synthase (NRPS) fso1. This Omphalotus olearius (Jack o'lantern) protein is Acyltransferase ato1.